The following is a 439-amino-acid chain: Tubulin beta chain (439 aa).

GTP-binding residues include Q11, E69, S138, G142, T143, G144, N204, and N226. E69 is a binding site for Mg(2+).

This sequence belongs to the tubulin family. In terms of assembly, dimer of alpha and beta chains. A typical microtubule is a hollow water-filled tube with an outer diameter of 25 nm and an inner diameter of 15 nM. Alpha-beta heterodimers associate head-to-tail to form protofilaments running lengthwise along the microtubule wall with the beta-tubulin subunit facing the microtubule plus end conferring a structural polarity. Microtubules usually have 13 protofilaments but different protofilament numbers can be found in some organisms and specialized cells. It depends on Mg(2+) as a cofactor.

The protein localises to the cytoplasm. It localises to the cytoskeleton. In terms of biological role, tubulin is the major constituent of microtubules, a cylinder consisting of laterally associated linear protofilaments composed of alpha- and beta-tubulin heterodimers. Microtubules grow by the addition of GTP-tubulin dimers to the microtubule end, where a stabilizing cap forms. Below the cap, tubulin dimers are in GDP-bound state, owing to GTPase activity of alpha-tubulin. This chain is Tubulin beta chain (TUB2), found in Encephalitozoon cuniculi (strain GB-M1) (Microsporidian parasite).